The following is a 210-amino-acid chain: Thiamine-phosphate synthase (210 aa).

4-amino-2-methyl-5-(diphosphooxymethyl)pyrimidine is bound by residues 36–40 (QLREK) and Asn68. The Mg(2+) site is built by Asp69 and Asp88. Ser107 lines the 4-amino-2-methyl-5-(diphosphooxymethyl)pyrimidine pocket. 133–135 (TGS) lines the 2-[(2R,5Z)-2-carboxy-4-methylthiazol-5(2H)-ylidene]ethyl phosphate pocket. Lys136 is a 4-amino-2-methyl-5-(diphosphooxymethyl)pyrimidine binding site. 2-[(2R,5Z)-2-carboxy-4-methylthiazol-5(2H)-ylidene]ethyl phosphate is bound by residues Gly164 and 184–185 (IS).

The protein belongs to the thiamine-phosphate synthase family. Mg(2+) serves as cofactor.

The catalysed reaction is 2-[(2R,5Z)-2-carboxy-4-methylthiazol-5(2H)-ylidene]ethyl phosphate + 4-amino-2-methyl-5-(diphosphooxymethyl)pyrimidine + 2 H(+) = thiamine phosphate + CO2 + diphosphate. The enzyme catalyses 2-(2-carboxy-4-methylthiazol-5-yl)ethyl phosphate + 4-amino-2-methyl-5-(diphosphooxymethyl)pyrimidine + 2 H(+) = thiamine phosphate + CO2 + diphosphate. It catalyses the reaction 4-methyl-5-(2-phosphooxyethyl)-thiazole + 4-amino-2-methyl-5-(diphosphooxymethyl)pyrimidine + H(+) = thiamine phosphate + diphosphate. It participates in cofactor biosynthesis; thiamine diphosphate biosynthesis; thiamine phosphate from 4-amino-2-methyl-5-diphosphomethylpyrimidine and 4-methyl-5-(2-phosphoethyl)-thiazole: step 1/1. Functionally, condenses 4-methyl-5-(beta-hydroxyethyl)thiazole monophosphate (THZ-P) and 2-methyl-4-amino-5-hydroxymethyl pyrimidine pyrophosphate (HMP-PP) to form thiamine monophosphate (TMP). This is Thiamine-phosphate synthase from Moorella thermoacetica (strain ATCC 39073 / JCM 9320).